We begin with the raw amino-acid sequence, 1746 residues long: Tenascin (1746 aa).

The first 22 residues, Met1–Gly22, serve as a signal peptide directing secretion. Residues Gly23–Cys185 are involved in hexamer formation. A glycan (N-linked (GlcNAc...) asparagine) is linked at Asn38. Phosphoserine is present on residues Ser65, Ser70, and Ser72. Ser72 carries O-linked (Xyl...) (chondroitin sulfate) serine glycosylation. A coiled-coil region spans residues Asp118–Gly145. N-linked (GlcNAc...) asparagine glycosylation is found at Asn166 and Asn184. One can recognise an EGF-like 1; incomplete domain in the interval Cys174–Ser186. 14 consecutive EGF-like domains span residues Glu187–Ser217, Gln218–Arg249, Glu250–Asn280, Glu281–Gly311, Glu312–Gly342, Arg343–Ser373, Glu374–Gly404, Glu405–Ser435, Gln436–Ser466, Glu467–Arg497, Glu498–Ala528, Asp529–Gly559, Gln560–Cys589, and Gly590–Cys620. Disulfide bonds link Cys190/Cys200, Cys194/Cys205, Cys207/Cys216, Cys221/Cys231, Cys225/Cys236, Cys238/Cys247, Cys252/Cys263, Cys256/Cys268, Cys270/Cys279, Cys284/Cys294, Cys288/Cys299, Cys301/Cys310, Cys315/Cys325, Cys319/Cys330, Cys332/Cys341, Cys346/Cys356, Cys350/Cys361, Cys363/Cys372, Cys377/Cys387, Cys381/Cys392, Cys394/Cys403, Cys408/Cys418, Cys412/Cys423, Cys425/Cys434, Cys439/Cys449, Cys443/Cys454, Cys456/Cys465, Cys470/Cys480, Cys474/Cys485, Cys487/Cys496, Cys501/Cys511, Cys505/Cys516, Cys518/Cys527, Cys532/Cys542, Cys536/Cys547, Cys549/Cys558, Cys563/Cys573, Cys567/Cys578, Cys580/Cys589, Cys594/Cys604, Cys598/Cys609, and Cys611/Cys620. A glycan (N-linked (GlcNAc...) asparagine) is linked at Asn327. Fibronectin type-III domains lie at Pro625 to Gly717, Leu718 to Thr801, Ala805 to Asp894, Ala895 to Pro988, Lys989 to Pro1075, Glu1076 to Pro1166, Glu1167 to Gly1256, Ser1257 to Gly1346, Pro1347 to Asp1433, and Ser1434 to Leu1522. N-linked (GlcNAc...) asparagine glycosylation is present at Asn788. Thr905 carries the phosphothreonine modification. 3 N-linked (GlcNAc...) asparagine glycosylation sites follow: Asn1034, Asn1079, and Asn1121. An N-linked (GlcNAc...) asparagine glycan is attached at Asn1354. The 216-residue stretch at Gly1520–Asn1735 folds into the Fibrinogen C-terminal domain.

The protein belongs to the tenascin family. In terms of assembly, homohexamer; disulfide-linked. A homotrimer may be formed in the triple coiled-coil region and may be stabilized by disulfide rings at both ends. Two of such half-hexabrachions may be disulfide linked within the central globule. Interacts with CSPG4. Interacts (via the 3rd fibronectin type-III domain) with integrin ITGA9:ITGB1. As to expression, submaxillary glands and brain.

Its subcellular location is the secreted. The protein resides in the extracellular space. It localises to the extracellular matrix. Its function is as follows. Extracellular matrix protein implicated in guidance of migrating neurons as well as axons during development, synaptic plasticity as well as neuronal regeneration. Promotes neurite outgrowth from cortical neurons grown on a monolayer of astrocytes. Ligand for integrins alpha-8/beta-1, alpha-9/beta-1, alpha-V/beta-3 and alpha-V/beta-6. In tumors, stimulates angiogenesis by elongation, migration and sprouting of endothelial cells. The polypeptide is Tenascin (TNC) (Sus scrofa (Pig)).